A 208-amino-acid polypeptide reads, in one-letter code: Ypt/Rab-type GTPase ypt71 (208 aa).

GTP contacts are provided by residues 17–23 (SGVGKTC), 33–40 (FSREYKAT), G66, 124–127 (NQID), and 158–160 (SAK). Residues 37-45 (YKATIGADF) carry the Effector region motif. 2 S-geranylgeranyl cysteine lipidation sites follow: C206 and C208. Residue C208 is modified to Cysteine methyl ester.

The protein belongs to the small GTPase superfamily. Rab family.

It is found in the vacuole membrane. Rab activation is generally mediated by a guanine exchange factor (GEF), while inactivation through hydrolysis of bound GTP is catalyzed by a GTPase activating protein (GAP). Ypt/Rab-type GTPases are key regulators of membrane trafficking and intracellular vesicular transport. They act as molecular switches that convert between GTP-bound and GDP-bound states, and regulate virtually all steps of membrane traffic from the formation of the transport vesicle at the donor membrane to its fusion at the target membrane. In the GDP-bound state, Ypt proteins are predominantly cytosolic, solubilized through the interaction with a GDP dissociation inhibitor (GDI). In the GTP-bound state, the proteins are membrane bound and interact with specific effector proteins that select cargo, promote vesicle movement, or verify the correct site of fusion. Act antagonistically to ypt7 in regulating vacuolar morphology, promoting vacuolar fission. In Schizosaccharomyces pombe (strain 972 / ATCC 24843) (Fission yeast), this protein is Ypt/Rab-type GTPase ypt71 (ypt71).